The following is a 58-amino-acid chain: Protein SHMOOSE (58 aa).

The tract at residues Phe27–Arg58 is disordered. The segment covering Asn35–Asn45 has biased composition (low complexity). Residues Pro46–Arg58 show a composition bias toward pro residues.

In terms of assembly, interacts with IMMT/mitofilin. In terms of tissue distribution, detected in cerebrospinal fluid (at protein level).

It localises to the mitochondrion. Its subcellular location is the nucleus. In terms of biological role, increases neural cell metabolic activity and mitochondrial oxygen consumption rate. The chain is Protein SHMOOSE from Homo sapiens (Human).